A 208-amino-acid polypeptide reads, in one-letter code: Probable thymidylate kinase (208 aa).

9 to 16 (GIDGAGKS) is an ATP binding site.

Belongs to the thymidylate kinase family.

It carries out the reaction dTMP + ATP = dTDP + ADP. This is Probable thymidylate kinase from Thermococcus gammatolerans (strain DSM 15229 / JCM 11827 / EJ3).